The sequence spans 511 residues: Maturase K (511 aa).

Belongs to the intron maturase 2 family. MatK subfamily.

The protein resides in the plastid. Its subcellular location is the chloroplast. Usually encoded in the trnK tRNA gene intron. Probably assists in splicing its own and other chloroplast group II introns. The chain is Maturase K from Paulownia tomentosa (Princess tree).